The chain runs to 147 residues: E3 ubiquitin-protein ligase RHA2B (147 aa).

The segment at 74-116 adopts an RING-type; atypical zinc-finger fold; that stretch reads CIVCLSKLKTGEEVRKLDCRHVFHKQCLEGWLQHLNFNCPLCR.

In terms of assembly, interacts with NAC19. Expressed in vascular tissue, root tips, embryos and pistils.

Its subcellular location is the cytoplasm. It localises to the nucleus. The catalysed reaction is S-ubiquitinyl-[E2 ubiquitin-conjugating enzyme]-L-cysteine + [acceptor protein]-L-lysine = [E2 ubiquitin-conjugating enzyme]-L-cysteine + N(6)-ubiquitinyl-[acceptor protein]-L-lysine.. Its pathway is protein modification; protein ubiquitination. E3 ubiquitin-protein ligase involved in the positive regulation of abscisic acid (ABA) signaling and responses to salt and osmotic stresses during seed germination and early seedling development. Acts additively with RHA2A in regulating ABA signaling and drought response. Possesses E3 ubiquitin ligase activity in vitro. The chain is E3 ubiquitin-protein ligase RHA2B from Arabidopsis thaliana (Mouse-ear cress).